The chain runs to 290 residues: L-proline cis-3-hydroxylase 1 (290 aa).

The Fe cation site is built by His107, Asp109, and His158. Position 168 (Arg168) interacts with 2-oxoglutarate.

The protein belongs to the L-proline cis-4-/cis-3-hydroxylase family. Homodimer. The cofactor is Fe(2+).

The catalysed reaction is L-proline + 2-oxoglutarate + O2 = cis-3-hydroxy-L-proline + succinate + CO2. With respect to regulation, inhibited by metal ions such as Co(2+), Zn(2+), Ni(2+) or Cu(2+). Is also inhibited by EDTA in vitro. Unlike the procollagen-proline cis-3- and trans-4-hydroxylases from mammals, does not necessarily require L-ascorbate for activity although it does increase the activity of the enzyme. Functionally, dioxygenase that catalyzes the 2-oxoglutarate-dependent selective hydroxylation of free L-proline to cis-3-hydroxy-L-proline (cis-3-Hyp). D-proline, trans-4-hydroxy-L-proline, cis-4-hydroxy-L-proline, cis-4-hydroxy-D-proline, and 3,4-dehydro-DL-proline are not substrates. The protein is L-proline cis-3-hydroxylase 1 of Streptomyces sp.